Here is a 315-residue protein sequence, read N- to C-terminus: MADMPPVLRHPEKAHRPDQPQPKKPDWIRVKAPTSQGYKDTRDILRNNRLSTVCEEAGCPNVGECWSQGHATMMIMGEICTRGCSFCNVMTGKPNALDVFEPGRVAHAVQKLGLKHVVITSVDRDDLDDGGAEHFAQTIRAIRHRSPASTIEVLTPDFLKSKPGALEAVVEARPDVFNHNLETVPGLYPTVRPGARYFHSLRLLQQVKELDPGMFTKSGIMVGLGEDRQGILQVMDDMRAADVDFITIGQYLQPTPKHHRVDRFVTPEEFKGYEKAAYGKGFLMVSATPLTRSSYHAGDDFAQLRAARLAKLGRA.

The segment at M1 to P33 is disordered. A compositionally biased stretch (basic and acidic residues) spans R9 to R29. [4Fe-4S] cluster-binding residues include C54, C59, C65, C80, C84, C87, and S294. The 218-residue stretch at W66–L283 folds into the Radical SAM core domain.

The protein belongs to the radical SAM superfamily. Lipoyl synthase family. [4Fe-4S] cluster serves as cofactor.

The protein resides in the cytoplasm. It catalyses the reaction [[Fe-S] cluster scaffold protein carrying a second [4Fe-4S](2+) cluster] + N(6)-octanoyl-L-lysyl-[protein] + 2 oxidized [2Fe-2S]-[ferredoxin] + 2 S-adenosyl-L-methionine + 4 H(+) = [[Fe-S] cluster scaffold protein] + N(6)-[(R)-dihydrolipoyl]-L-lysyl-[protein] + 4 Fe(3+) + 2 hydrogen sulfide + 2 5'-deoxyadenosine + 2 L-methionine + 2 reduced [2Fe-2S]-[ferredoxin]. The protein operates within protein modification; protein lipoylation via endogenous pathway; protein N(6)-(lipoyl)lysine from octanoyl-[acyl-carrier-protein]: step 2/2. Its function is as follows. Catalyzes the radical-mediated insertion of two sulfur atoms into the C-6 and C-8 positions of the octanoyl moiety bound to the lipoyl domains of lipoate-dependent enzymes, thereby converting the octanoylated domains into lipoylated derivatives. This chain is Lipoyl synthase, found in Paracoccus denitrificans (strain Pd 1222).